The sequence spans 541 residues: Arginine--tRNA ligase (541 aa).

A 'HIGH' region motif is present at residues 119-129 (ANPTGPLHIGH).

The protein belongs to the class-I aminoacyl-tRNA synthetase family. In terms of assembly, monomer.

It localises to the cytoplasm. The catalysed reaction is tRNA(Arg) + L-arginine + ATP = L-arginyl-tRNA(Arg) + AMP + diphosphate. The polypeptide is Arginine--tRNA ligase (Helicobacter pylori (strain Shi470)).